A 241-amino-acid polypeptide reads, in one-letter code: Uridylate kinase (241 aa).

9–10 contacts ATP; the sequence is GS. Glycine 44 is a UMP binding site. Residues glycine 45 and arginine 49 each coordinate ATP. UMP is bound by residues aspartate 66 and 114-120; that span reads VVAGQTT. Positions 140, 146, and 149 each coordinate ATP.

This sequence belongs to the UMP kinase family. Homohexamer.

The protein resides in the cytoplasm. It catalyses the reaction UMP + ATP = UDP + ADP. Its pathway is pyrimidine metabolism; CTP biosynthesis via de novo pathway; UDP from UMP (UMPK route): step 1/1. Its activity is regulated as follows. Inhibited by UTP. Functionally, catalyzes the reversible phosphorylation of UMP to UDP. This is Uridylate kinase from Halobacterium salinarum (strain ATCC 29341 / DSM 671 / R1).